A 207-amino-acid chain; its full sequence is ATP-dependent Clp protease proteolytic subunit (207 aa).

Catalysis depends on Ser-111, which acts as the Nucleophile. Residue His-136 is part of the active site.

The protein belongs to the peptidase S14 family. As to quaternary structure, fourteen ClpP subunits assemble into 2 heptameric rings which stack back to back to give a disk-like structure with a central cavity, resembling the structure of eukaryotic proteasomes.

Its subcellular location is the cytoplasm. The catalysed reaction is Hydrolysis of proteins to small peptides in the presence of ATP and magnesium. alpha-casein is the usual test substrate. In the absence of ATP, only oligopeptides shorter than five residues are hydrolyzed (such as succinyl-Leu-Tyr-|-NHMec, and Leu-Tyr-Leu-|-Tyr-Trp, in which cleavage of the -Tyr-|-Leu- and -Tyr-|-Trp bonds also occurs).. In terms of biological role, cleaves peptides in various proteins in a process that requires ATP hydrolysis. Has a chymotrypsin-like activity. Plays a major role in the degradation of misfolded proteins. This chain is ATP-dependent Clp protease proteolytic subunit, found in Photorhabdus laumondii subsp. laumondii (strain DSM 15139 / CIP 105565 / TT01) (Photorhabdus luminescens subsp. laumondii).